The following is a 271-amino-acid chain: Probable ribosomal RNA small subunit methyltransferase A (271 aa).

Residues asparagine 22, leucine 24, glycine 49, glutamate 70, aspartate 97, and asparagine 112 each contribute to the S-adenosyl-L-methionine site.

This sequence belongs to the class I-like SAM-binding methyltransferase superfamily. rRNA adenine N(6)-methyltransferase family. RsmA subfamily.

The protein localises to the cytoplasm. Functionally, specifically dimethylates two adjacent adenosines in the loop of a conserved hairpin near the 3'-end of 16S rRNA in the 30S particle. May play a critical role in biogenesis of 30S subunits. This chain is Probable ribosomal RNA small subunit methyltransferase A, found in Methanosphaera stadtmanae (strain ATCC 43021 / DSM 3091 / JCM 11832 / MCB-3).